The primary structure comprises 739 residues: Xylosyl- and glucuronyltransferase LARGE2s (739 aa).

Residues 1–10 (MLCSWRVKLK) are Cytoplasmic-facing. The chain crosses the membrane as a helical; Signal-anchor for type II membrane protein span at residues 11–31 (LLLATITLAVLLSWLYLFVGS). Residues 32-739 (LEYGRFLLLP…LKYLTAERNL (708 aa)) lie on the Lumenal side of the membrane. Residues 80–105 (AEGSDGNPQWAASAEDGPPLGGERNN) are disordered. N-linked (GlcNAc...) asparagine glycans are attached at residues N105, N131, and N217. Positions 121-396 (LHVAIVCAGH…FLEYDGNLLR (276 aa)) are xylosyltransferase activity. Residues D225 and D227 each contribute to the Mn(2+) site. The N-linked (GlcNAc...) asparagine glycan is linked to N255. The segment at 397–739 (RELFGCASLP…LKYLTAERNL (343 aa)) is glucuronyltransferase activity. D546 and D548 together coordinate Mn(2+).

The protein in the C-terminal section; belongs to the glycosyltransferase 49 family. It in the N-terminal section; belongs to the glycosyltransferase 8 family. Mn(2+) serves as cofactor.

Its subcellular location is the golgi apparatus membrane. It carries out the reaction 3-O-[beta-D-GlcA-(1-&gt;3)-beta-D-Xyl-(1-&gt;4)-Rib-ol-P-Rib-ol-P-3-beta-D-GalNAc-(1-&gt;3)-beta-D-GlcNAc-(1-&gt;4)-(O-6-P-alpha-D-Man)]-Thr-[protein] + UDP-alpha-D-xylose = 3-O-[alpha-D-Xyl-(1-&gt;3)-beta-D-GlcA-(1-&gt;4)-beta-D-Xyl-(1-&gt;4)-Rib-ol-P-Rib-ol-P-3-beta-D-GalNAc-(1-&gt;3)-beta-D-GlcNAc-(1-&gt;4)-(O-6-P-alpha-D-Man)]-Thr-[protein] + UDP + H(+). It catalyses the reaction 3-O-{(1-&gt;[3)-alpha-D-Xyl-(1-&gt;3)-beta-D-GlcA-(1-&gt;](n)-4)-beta-D-Xyl-(1-&gt;4)-Rib-ol-P-Rib-ol-P-3-beta-D-GalNAc-(1-&gt;3)-beta-D-GlcNAc-(1-&gt;4)-O-6-P-alpha-D-Man}-L-Thr-[protein] + UDP-alpha-D-glucuronate = 3-O-{beta-D-GlcA-(1-&gt;[3)-alpha-D-Xyl-(1-&gt;3)-beta-D-GlcA-(1-&gt;](n)-4)-beta-D-Xyl-(1-&gt;4)-Rib-ol-P-Rib-ol-P-3-beta-D-GalNAc-(1-&gt;3)-beta-D-GlcNAc-(1-&gt;4)-O-6-P-alpha-D-Man}-L-Thr-[protein] + UDP + H(+). The catalysed reaction is 3-O-{beta-D-GlcA-(1-&gt;[3)-alpha-D-Xyl-(1-&gt;3)-beta-D-GlcA-(1-&gt;](n)-4)-beta-D-Xyl-(1-&gt;4)-Rib-ol-P-Rib-ol-P-3-beta-D-GalNAc-(1-&gt;3)-beta-D-GlcNAc-(1-&gt;4)-O-6-P-alpha-D-Man}-L-Thr-[protein] + UDP-alpha-D-xylose = 3-O-{(1-&gt;[3)-alpha-D-Xyl-(1-&gt;3)-beta-D-GlcA-(1-&gt;](n+1)-4)-beta-D-Xyl-(1-&gt;4)-Rib-ol-P-Rib-ol-P-3-beta-D-GalNAc-(1-&gt;3)-beta-D-GlcNAc-(1-&gt;4)-O-6-P-alpha-D-Man}-L-Thr-[protein] + UDP + H(+). It participates in protein modification; protein glycosylation. In terms of biological role, bifunctional glycosyltransferase with both alpha-1,3-xylosyltransferase and beta-1,3-glucuronyltransferase activities involved in the maturation of alpha-dystroglycan (DAG1) by glycosylation leading to DAG1 binding to laminin G-like domain-containing extracellular proteins with high affinity and in a phosphorylated-O-mannosyl trisaccharide dependent manner. Elongates the glucuronyl-beta-1,4-xylose-beta disaccharide primer structure by adding repeating units [-3-Xylose-alpha-1,3-GlcA-beta-1-] to produce a heteropolysaccharide. Supports the maturation of DAG1 more effectively than LARGE1. In addition, can modify both heparan sulfate (HS)- and chondroitin/dermatan sulfate (CS/DS)-proteoglycans (PGs), namely GPC4, with a glycosaminoglycan (GAG)-like polysaccharide composed of xylose and glucuronic acid to confer laminin binding. This is Xylosyl- and glucuronyltransferase LARGE2s from Gallus gallus (Chicken).